The sequence spans 210 residues: Riboflavin kinase (210 aa).

The tract at residues 1 to 81 (MECKERRLIG…DLLRYFNIAS (81 aa)) is H-T-H motif-like. Residues 82 to 210 (IRLIGRVISG…GDIVEVEILL (129 aa)) form a riboflavin kinase region. 91-96 (GLGEGA) contributes to the CDP binding site. The Mg(2+) site is built by Thr-120 and Asn-122. 2 residues coordinate FMN: Thr-177 and Glu-185. 190-193 (VKLR) is a binding site for CDP.

It belongs to the archaeal riboflavin kinase family. Mg(2+) serves as cofactor.

It carries out the reaction riboflavin + CTP = CDP + FMN + H(+). The protein operates within cofactor biosynthesis; FMN biosynthesis; FMN from riboflavin (CTP route): step 1/1. Its function is as follows. Catalyzes the CTP-dependent phosphorylation of riboflavin (vitamin B2) to form flavin mononucleotide (FMN). This Pyrobaculum aerophilum (strain ATCC 51768 / DSM 7523 / JCM 9630 / CIP 104966 / NBRC 100827 / IM2) protein is Riboflavin kinase (ribK).